The following is a 266-amino-acid chain: Ciliary microtubule inner protein 4 (266 aa).

Composition is skewed to polar residues over residues 1–15 (MELS…LTRT) and 24–38 (QDMN…SLDN). Residues 1-124 (MELSHRQGTT…SPEQRTVPLS (124 aa)) are disordered. A compositionally biased stretch (low complexity) spans 47-63 (LSQSPLGSSLGQGYLET). The span at 81–102 (HPEDLKKGASRSSSRDARETFR) shows a compositional bias: basic and acidic residues.

In terms of tissue distribution, only detected in testis, in the spermatids and sperm within the seminiferous tubules (at protein level).

The protein resides in the cytoplasmic vesicle. It is found in the secretory vesicle. It localises to the acrosome. The protein localises to the cell projection. Its subcellular location is the cilium. The protein resides in the flagellum. Its function is as follows. Seems to be associated with spermiogenesis but is not essential for sperm development and male fertility. The polypeptide is Ciliary microtubule inner protein 4 (Cimip4) (Mus musculus (Mouse)).